Reading from the N-terminus, the 162-residue chain is MVKKKSANASASIARNKRATFEYRIEDKIEAGLQLMGWEVKSIRMGKVNLSDCYVYIKEGEAFMHGCTIQPLNTASTHVICDPIRTKKLLLKRSEIDKLAGLIERQGYTLVPLSMYWRKGAWVKVEIGLGKGKKDHDKREDTKEREWKIEKARVMKKDKENA.

Belongs to the SmpB family.

It localises to the cytoplasm. Required for rescue of stalled ribosomes mediated by trans-translation. Binds to transfer-messenger RNA (tmRNA), required for stable association of tmRNA with ribosomes. tmRNA and SmpB together mimic tRNA shape, replacing the anticodon stem-loop with SmpB. tmRNA is encoded by the ssrA gene; the 2 termini fold to resemble tRNA(Ala) and it encodes a 'tag peptide', a short internal open reading frame. During trans-translation Ala-aminoacylated tmRNA acts like a tRNA, entering the A-site of stalled ribosomes, displacing the stalled mRNA. The ribosome then switches to translate the ORF on the tmRNA; the nascent peptide is terminated with the 'tag peptide' encoded by the tmRNA and targeted for degradation. The ribosome is freed to recommence translation, which seems to be the essential function of trans-translation. The sequence is that of SsrA-binding protein from Shewanella frigidimarina (strain NCIMB 400).